A 268-amino-acid polypeptide reads, in one-letter code: Phosphatidylglycerol--prolipoprotein diacylglyceryl transferase (268 aa).

7 helical membrane-spanning segments follow: residues 23-43, 62-82, 97-117, 132-152, 179-199, 206-226, and 241-261; these read IGLR…RWLA, LLFN…VFFY, VWEG…AMIW, FVAP…FINL, SQLY…NIFI, ASVA…VEYV, and GQAL…WAYS. R145 is a binding site for a 1,2-diacyl-sn-glycero-3-phospho-(1'-sn-glycerol).

This sequence belongs to the Lgt family.

Its subcellular location is the cell inner membrane. The catalysed reaction is L-cysteinyl-[prolipoprotein] + a 1,2-diacyl-sn-glycero-3-phospho-(1'-sn-glycerol) = an S-1,2-diacyl-sn-glyceryl-L-cysteinyl-[prolipoprotein] + sn-glycerol 1-phosphate + H(+). Its pathway is protein modification; lipoprotein biosynthesis (diacylglyceryl transfer). Its function is as follows. Catalyzes the transfer of the diacylglyceryl group from phosphatidylglycerol to the sulfhydryl group of the N-terminal cysteine of a prolipoprotein, the first step in the formation of mature lipoproteins. This is Phosphatidylglycerol--prolipoprotein diacylglyceryl transferase from Haemophilus influenzae (strain PittEE).